The chain runs to 806 residues: Transitional endoplasmic reticulum ATPase (806 aa).

Ala-2 is subject to N-acetylalanine. Residues Ser-3 and Ser-7 each carry the phosphoserine modification. Lys-8 is covalently cross-linked (Glycyl lysine isopeptide (Lys-Gly) (interchain with G-Cter in SUMO2)). Position 13 is a phosphoserine (Ser-13). Lys-18 is covalently cross-linked (Glycyl lysine isopeptide (Lys-Gly) (interchain with G-Cter in SUMO2)). The residue at position 37 (Ser-37) is a Phosphoserine. 247 to 253 (PGTGKTL) serves as a coordination point for ATP. Lys-315 carries the N6,N6,N6-trimethyllysine; by VCPKMT modification. Positions 348 and 384 each coordinate ATP. Thr-436 is subject to Phosphothreonine. A Phosphoserine modification is found at Ser-462. N6-acetyllysine is present on residues Lys-502 and Lys-505. 521–526 (GCGKTL) lines the ATP pocket. At Lys-668 the chain carries N6-acetyllysine; alternate. Lys-668 bears the N6-succinyllysine; alternate mark. At Ser-702 the chain carries Phosphoserine. The interval 708–727 (RRERERQTNPSAMEVEEDDP) is disordered. Lys-754 is modified (N6-acetyllysine). The tract at residues 768–806 (FGSFRFPSGNQGGAGPSQGSGGGTGGNVYTEDNDDDLYG) is disordered. 3 positions are modified to phosphoserine: Ser-770, Ser-775, and Ser-787. The segment covering 777 to 793 (NQGGAGPSQGSGGGTGG) has biased composition (gly residues). Positions 797 to 806 (TEDNDDDLYG) are interaction with UBXN6. A PIM motif motif is present at residues 802–806 (DDLYG). Residue Tyr-805 is modified to Phosphotyrosine.

Belongs to the AAA ATPase family. As to quaternary structure, homohexamer. Forms a ring-shaped particle of 12.5 nm diameter, that displays 6-fold radial symmetry. Part of a ternary complex containing STX5A, NSFL1C and VCP. NSFL1C forms a homotrimer that binds to one end of a VCP homohexamer. The complex binds to membranes enriched in phosphatidylethanolamine-containing lipids and promotes Golgi membrane fusion. Binds to a heterodimer of NPLOC4 and UFD1, binding to this heterodimer inhibits Golgi-membrane fusion. Interaction with VCIP135 leads to dissociation of the complex via ATP hydrolysis by VCP. Part of a ternary complex containing NPLOC4, UFD1 and VCP. Interacts with NSFL1C-like protein p37; the complex has membrane fusion activity and is required for Golgi and endoplasmic reticulum biogenesis. Interacts with SELENOS and SYVN1, as well as with DERL1 (via SHP-box motif), DERL2 and DERL3; which probably transfer misfolded proteins from the ER to VCP. Interacts with SVIP and DERL1. Component of a complex required to couple retrotranslocation, ubiquitination and deglycosylation composed of NGLY1, SAKS1, AMFR, VCP and RAD23B. Part of a complex composed of STUB1/CHIP, VCP/p97, CHRNA3, and UBXN2A that modulates the ubiquitination and endoplasmic reticulum-associated degradation (ERAD) of CHRNA3. Within the complex UBXN2A acts as a scaffold protein required for the interaction of CHRNA3 with VCP/p97, this interaction also inhibits CHRNA3 ubiquitination by STUB1/CHIP and subsequently ERAD. Interacts with UBXN2A (via UBX domain); the interaction is required for the interaction of CHRNA3 in the STUB1-VCP-UBXN2A complex. Directly interacts with UBXN4 and RNF19A. Interacts with CASR. Interacts with UBE4B and YOD1. Interacts with clathrin. Interacts with RNF103. Interacts with TRIM13 and TRIM21. Component of a VCP/p97-AMFR/gp78 complex that participates in the final step of the endoplasmic reticulum-associated degradation (ERAD) of HMGCR. Interacts directly with AMFR/gp78 (via its VIM). Interacts with RHBDD1 (via C-terminal domain). Interacts with SPRTN; leading to recruitment to stalled replication forks. Interacts with WASHC5. Interacts with UBOX5. Interacts (via N-terminus) with UBXN7, UBXN8, and probably several other UBX domain-containing proteins (via UBX domains); the interactions are mutually exclusive with VIM-dependent interactions such as those with AMFR and SELENOS. Forms a complex with UBQLN1 and UBXN4. Interacts (via the PIM motif) with RNF31 (via the PUB domain). Interacts with RIGI and RNF125; interaction takes place when RIGI is ubiquitinated via 'Lys-63'-linked ubiquitin on its CARD domains, leading to recruit RNF125 and promote ubiquitination and degradation of RIGI. Interacts with BAG6. Interacts with UBXN10. Interacts with UBXN6; the interaction with UBXN6 is direct and competitive with UFD1. Forms a ternary complex with CAV1 and UBXN6. Interacts with PLAA, UBXN6 and YOD1; may form a complex involved in macroautophagy. Interacts with ANKZF1. Interacts with ubiquitin-binding protein FAF1. Interacts with ZFAND2B (via VIM motif); the interaction is direct. Interacts with ZFAND1 (via its ubiquitin-like region); this interaction occurs in an arsenite-dependent manner. Interacts with CCDC47. Interacts with LMBR1L and UBAC2. Interacts with ATXN3. Interacts with TEX264; bridging VCP to covalent DNA-protein cross-links (DPCs). Post-translationally, ISGylated. Methylation at Lys-315 catalyzed by VCPKMT is increased in the presence of ASPSCR1. Lys-315 methylation may decrease ATPase activity. In terms of processing, phosphorylated by tyrosine kinases in response to T-cell antigen receptor activation. Phosphorylated in mitotic cells.

It is found in the cytoplasm. Its subcellular location is the cytosol. The protein localises to the endoplasmic reticulum. It localises to the nucleus. The protein resides in the stress granule. It catalyses the reaction ATP + H2O = ADP + phosphate + H(+). Its function is as follows. Necessary for the fragmentation of Golgi stacks during mitosis and for their reassembly after mitosis. Involved in the formation of the transitional endoplasmic reticulum (tER). The transfer of membranes from the endoplasmic reticulum to the Golgi apparatus occurs via 50-70 nm transition vesicles which derive from part-rough, part-smooth transitional elements of the endoplasmic reticulum (tER). Vesicle budding from the tER is an ATP-dependent process. The ternary complex containing UFD1, VCP and NPLOC4 binds ubiquitinated proteins and is necessary for the export of misfolded proteins from the ER to the cytoplasm, where they are degraded by the proteasome. The NPLOC4-UFD1-VCP complex regulates spindle disassembly at the end of mitosis and is necessary for the formation of a closed nuclear envelope. Regulates E3 ubiquitin-protein ligase activity of RNF19A. Component of the VCP/p97-AMFR/gp78 complex that participates in the final step of the sterol-mediated ubiquitination and endoplasmic reticulum-associated degradation (ERAD) of HMGCR. Mediates the endoplasmic reticulum-associated degradation of CHRNA3 in cortical neurons as part of the STUB1-VCP-UBXN2A complex. Involved in endoplasmic reticulum stress-induced pre-emptive quality control, a mechanism that selectively attenuates the translocation of newly synthesized proteins into the endoplasmic reticulum and reroutes them to the cytosol for proteasomal degradation. Involved in clearance process by mediating G3BP1 extraction from stress granules. Also involved in DNA damage response: recruited to double-strand breaks (DSBs) sites in a RNF8- and RNF168-dependent manner and promotes the recruitment of TP53BP1 at DNA damage sites. Recruited to stalled replication forks by SPRTN: may act by mediating extraction of DNA polymerase eta (POLH) to prevent excessive translesion DNA synthesis and limit the incidence of mutations induced by DNA damage. Together with SPRTN metalloprotease, involved in the repair of covalent DNA-protein cross-links (DPCs) during DNA synthesis. Involved in interstrand cross-link repair in response to replication stress by mediating unloading of the ubiquitinated CMG helicase complex. Mediates extraction of PARP1 trapped to chromatin: recognizes and binds ubiquitinated PARP1 and promotes its removal. Required for cytoplasmic retrotranslocation of stressed/damaged mitochondrial outer-membrane proteins and their subsequent proteasomal degradation. Essential for the maturation of ubiquitin-containing autophagosomes and the clearance of ubiquitinated protein by autophagy. Acts as a negative regulator of type I interferon production by interacting with RIGI: interaction takes place when RIGI is ubiquitinated via 'Lys-63'-linked ubiquitin on its CARD domains, leading to recruit RNF125 and promote ubiquitination and degradation of RIGI. May play a role in the ubiquitin-dependent sorting of membrane proteins to lysosomes where they undergo degradation. May more particularly play a role in caveolins sorting in cells. By controlling the steady-state expression of the IGF1R receptor, indirectly regulates the insulin-like growth factor receptor signaling pathway. This is Transitional endoplasmic reticulum ATPase (VCP) from Bos taurus (Bovine).